A 374-amino-acid chain; its full sequence is Small ribosomal subunit protein uS4m (374 aa).

The S4 RNA-binding domain occupies 259–323 (GRLENFLMRL…KKLYFFIKSK (65 aa)).

It belongs to the universal ribosomal protein uS4 family.

The protein resides in the mitochondrion. The protein is Small ribosomal subunit protein uS4m (RPS4) of Acanthamoeba castellanii (Amoeba).